The chain runs to 489 residues: Cobyric acid synthase (489 aa).

The region spanning 247-439 is the GATase cobBQ-type domain; it reads ALKVVVPVLP…IHGVFDEPAA (193 aa). C328 serves as the catalytic Nucleophile. H431 is an active-site residue.

The protein belongs to the CobB/CobQ family. CobQ subfamily.

It participates in cofactor biosynthesis; adenosylcobalamin biosynthesis. Its function is as follows. Catalyzes amidations at positions B, D, E, and G on adenosylcobyrinic A,C-diamide. NH(2) groups are provided by glutamine, and one molecule of ATP is hydrogenolyzed for each amidation. This Marinobacter nauticus (strain ATCC 700491 / DSM 11845 / VT8) (Marinobacter aquaeolei) protein is Cobyric acid synthase.